The sequence spans 436 residues: p-aminobenzoyl-glutamate hydrolase subunit A (436 aa).

Belongs to the peptidase M20 family. As to quaternary structure, forms a heterodimer with AbgB. It depends on Mn(2+) as a cofactor.

In terms of biological role, component of the p-aminobenzoyl-glutamate hydrolase multicomponent enzyme system which catalyzes the cleavage of p-aminobenzoyl-glutamate (PABA-GLU) to form p-aminobenzoate (PABA) and glutamate. AbgAB does not degrade dipeptides and the physiological role of abgABT should be clarified. The chain is p-aminobenzoyl-glutamate hydrolase subunit A (abgA) from Escherichia coli (strain K12).